Here is a 430-residue protein sequence, read N- to C-terminus: MTRSEALFEQAKKTIPGGVNSPVRAFNGVGGSPLFIEKANGAYIYDADGKAYIDYVGSWGPMILGHNHPKIRAAVLAAVENGLSFGAPTELEVQMAEKVISMVPSIEQVRMVSSGTEATMSAIRLARGFTNRDKILKFEGCYHGHADCLLVKAGSGALTLGQPSSPGIPEDFAKHTLTAVYNDLDSVRTLFEQYPTEISCIIIEPVAGNMNCIPPVPGFLQGLRDMCDEFGALLIIDEVMTGFRVSQSGAQGYYGVTPDLTTLGKVIGGGMPVGAFGGRKDVMQFIAPTGPVYQAGTLSGNPIAMSAGLAQMDALCEEGLYEALSAKTKRIAEGFKAAADKHGIPMAINYVGGMFGFFFTEQEQITRFDQVTKCNIEHFRTFYHGMLDEGVYLAPSAYEAGFLSMAHGEEELRLTLEAADRVLASMKTES.

Lys-265 is modified (N6-(pyridoxal phosphate)lysine).

This sequence belongs to the class-III pyridoxal-phosphate-dependent aminotransferase family. HemL subfamily. Homodimer. The cofactor is pyridoxal 5'-phosphate.

It localises to the cytoplasm. The catalysed reaction is (S)-4-amino-5-oxopentanoate = 5-aminolevulinate. The protein operates within porphyrin-containing compound metabolism; protoporphyrin-IX biosynthesis; 5-aminolevulinate from L-glutamyl-tRNA(Glu): step 2/2. This Shewanella putrefaciens (strain CN-32 / ATCC BAA-453) protein is Glutamate-1-semialdehyde 2,1-aminomutase.